Consider the following 886-residue polypeptide: Putative leucine-rich repeat receptor-like serine/threonine-protein kinase At2g14440 (886 aa).

A signal peptide spans 1–23; that stretch reads METRSKLMLLACATFSIISLVKS. The Extracellular portion of the chain corresponds to 24–528; that stretch reads QNQQGFISLY…KHQPKSWLVA (505 aa). Asparagine 49, asparagine 69, asparagine 232, asparagine 236, asparagine 259, asparagine 292, asparagine 434, asparagine 447, asparagine 458, and asparagine 471 each carry an N-linked (GlcNAc...) asparagine glycan. 4 LRR repeats span residues 413–436, 437–460, 461–483, and 485–507; these read RIIS…QNLT, MLRE…QNLT, MLRE…LATI, and PLLV…LQDR. A helical transmembrane segment spans residues 529-549; it reads IVASISCVAVTIIVLVLIFIF. Over 550–886 the chain is Cytoplasmic; sequence RRRKSSTRKV…TFISDIPSAR (337 aa). Positions 581–850 constitute a Protein kinase domain; it reads NNFEVVLGKG…NMTRVAHELN (270 aa). ATP-binding positions include 587–595 and lysine 608; that span reads LGKGGFGVV. Position 653 is a phosphotyrosine (tyrosine 653). Residue aspartate 705 is the Proton acceptor of the active site. At serine 739 the chain carries Phosphoserine. Residues threonine 740 and threonine 745 each carry the phosphothreonine modification. Position 753 is a phosphotyrosine (tyrosine 753). Positions 863-886 are disordered; that stretch reads SQDQNSSKSSGHTVTFISDIPSAR. The segment covering 865–878 has biased composition (polar residues); it reads DQNSSKSSGHTVTF.

The protein belongs to the protein kinase superfamily. Ser/Thr protein kinase family.

Its subcellular location is the cell membrane. The catalysed reaction is L-seryl-[protein] + ATP = O-phospho-L-seryl-[protein] + ADP + H(+). It catalyses the reaction L-threonyl-[protein] + ATP = O-phospho-L-threonyl-[protein] + ADP + H(+). The chain is Putative leucine-rich repeat receptor-like serine/threonine-protein kinase At2g14440 from Arabidopsis thaliana (Mouse-ear cress).